Here is a 1184-residue protein sequence, read N- to C-terminus: DNA-directed RNA polymerase subunit beta' (1184 aa).

Cys-60, Cys-62, Cys-75, and Cys-78 together coordinate Zn(2+). Mg(2+) contacts are provided by Asp-449, Asp-451, and Asp-453. Positions 794, 867, 874, and 877 each coordinate Zn(2+). The disordered stretch occupies residues 1165 to 1184 (NDQQERQDKEKEETEVKASN).

It belongs to the RNA polymerase beta' chain family. In terms of assembly, the RNAP catalytic core consists of 2 alpha, 1 beta, 1 beta' and 1 omega subunit. When a sigma factor is associated with the core the holoenzyme is formed, which can initiate transcription. It depends on Mg(2+) as a cofactor. Requires Zn(2+) as cofactor.

It catalyses the reaction RNA(n) + a ribonucleoside 5'-triphosphate = RNA(n+1) + diphosphate. In terms of biological role, DNA-dependent RNA polymerase catalyzes the transcription of DNA into RNA using the four ribonucleoside triphosphates as substrates. The chain is DNA-directed RNA polymerase subunit beta' from Thermoanaerobacter pseudethanolicus (strain ATCC 33223 / 39E) (Clostridium thermohydrosulfuricum).